Consider the following 158-residue polypeptide: Phosphopantetheine adenylyltransferase (158 aa).

Position 9 (Ser9) interacts with substrate. ATP contacts are provided by residues 9–10 (SF) and His17. The substrate site is built by Lys41, Val73, and Lys87. ATP is bound by residues 88 to 90 (GLR), Glu98, and 122 to 128 (YSFVSSS).

Belongs to the bacterial CoaD family. As to quaternary structure, homohexamer. It depends on Mg(2+) as a cofactor.

The protein localises to the cytoplasm. The enzyme catalyses (R)-4'-phosphopantetheine + ATP + H(+) = 3'-dephospho-CoA + diphosphate. Its pathway is cofactor biosynthesis; coenzyme A biosynthesis; CoA from (R)-pantothenate: step 4/5. Reversibly transfers an adenylyl group from ATP to 4'-phosphopantetheine, yielding dephospho-CoA (dPCoA) and pyrophosphate. This Mycolicibacterium smegmatis (strain ATCC 700084 / mc(2)155) (Mycobacterium smegmatis) protein is Phosphopantetheine adenylyltransferase.